We begin with the raw amino-acid sequence, 196 residues long: Holliday junction branch migration complex subunit RuvA (196 aa).

A domain I region spans residues 1-63 (MIASVRGEVI…EDSMTLYGFA (63 aa)). A domain II region spans residues 64–142 (DADARDLFGT…PVTTGAGVTA (79 aa)). The segment at 143 to 151 (VGGHAVRGP) is flexible linker. Residues 151 to 196 (PVVEALVGLGFAAKQAEEACDKVLAADPDATTSSALRAALSMLGKK) form a domain III region.

The protein belongs to the RuvA family. In terms of assembly, homotetramer. Forms an RuvA(8)-RuvB(12)-Holliday junction (HJ) complex. HJ DNA is sandwiched between 2 RuvA tetramers; dsDNA enters through RuvA and exits via RuvB. An RuvB hexamer assembles on each DNA strand where it exits the tetramer. Each RuvB hexamer is contacted by two RuvA subunits (via domain III) on 2 adjacent RuvB subunits; this complex drives branch migration. In the full resolvosome a probable DNA-RuvA(4)-RuvB(12)-RuvC(2) complex forms which resolves the HJ.

The protein localises to the cytoplasm. In terms of biological role, the RuvA-RuvB-RuvC complex processes Holliday junction (HJ) DNA during genetic recombination and DNA repair, while the RuvA-RuvB complex plays an important role in the rescue of blocked DNA replication forks via replication fork reversal (RFR). RuvA specifically binds to HJ cruciform DNA, conferring on it an open structure. The RuvB hexamer acts as an ATP-dependent pump, pulling dsDNA into and through the RuvAB complex. HJ branch migration allows RuvC to scan DNA until it finds its consensus sequence, where it cleaves and resolves the cruciform DNA. The chain is Holliday junction branch migration complex subunit RuvA from Mycobacterium sp. (strain JLS).